The following is a 90-amino-acid chain: DNA-binding protein HU-beta (90 aa).

Belongs to the bacterial histone-like protein family. Heterodimer of an alpha and a beta chain.

Histone-like DNA-binding protein which is capable of wrapping DNA to stabilize it, and thus to prevent its denaturation under extreme environmental conditions. The protein is DNA-binding protein HU-beta (hupB) of Escherichia coli O6:H1 (strain CFT073 / ATCC 700928 / UPEC).